The sequence spans 426 residues: UDP-N-acetylmuramoylalanine--D-glutamate ligase (426 aa).

112-118 (GSVGKST) contacts ATP.

It belongs to the MurCDEF family.

Its subcellular location is the cytoplasm. It catalyses the reaction UDP-N-acetyl-alpha-D-muramoyl-L-alanine + D-glutamate + ATP = UDP-N-acetyl-alpha-D-muramoyl-L-alanyl-D-glutamate + ADP + phosphate + H(+). It functions in the pathway cell wall biogenesis; peptidoglycan biosynthesis. In terms of biological role, cell wall formation. Catalyzes the addition of glutamate to the nucleotide precursor UDP-N-acetylmuramoyl-L-alanine (UMA). In Thermosipho melanesiensis (strain DSM 12029 / CIP 104789 / BI429), this protein is UDP-N-acetylmuramoylalanine--D-glutamate ligase.